The chain runs to 1117 residues: Reverse gyrase (1117 aa).

The RG N-terminal-type zinc finger occupies Leu-3–Val-42. Residues Cys-13, Cys-16, Cys-31, and Cys-34 each contribute to the Zn(2+) site. ATP is bound by residues Gln-84 and Ala-101 to Thr-108. The region spanning Ala-88 to Ile-284 is the Helicase ATP-binding domain. A DEAD box motif is present at residues Asp-206–Asp-209. The segment at Lys-551–Asn-1117 is topoisomerase I. The region spanning Ser-555–Ile-712 is the Toprim domain. Glu-561 contributes to the Mg(2+) binding site. The RG C-terminal-type zinc finger occupies Ile-631 to Asp-658. Residues Cys-634, Cys-637, Cys-648, and Cys-651 each coordinate Zn(2+). Asp-681 provides a ligand contact to Mg(2+). The Topo IA-type catalytic domain maps to Asp-728 to Leu-1114. Residue Tyr-864 is the O-(5'-phospho-DNA)-tyrosine intermediate of the active site.

In the N-terminal section; belongs to the DEAD box helicase family. DDVD subfamily. The protein in the C-terminal section; belongs to the type IA topoisomerase family. Monomer. Requires Zn(2+) as cofactor. It depends on Mg(2+) as a cofactor.

It is found in the cytoplasm. It carries out the reaction ATP + H2O = ADP + phosphate + H(+). Its function is as follows. Modifies the topological state of DNA by introducing positive supercoils in an ATP-dependent process, increasing the linking number in steps of +1; also positively supercoils with dATP and ATP-gamma-S. With UTP or dTTP relaxes negatively supercoiled DNA, in the absence of any nucleotide partially relaxes negative supercoils. In the absence of nucleotide has a higher affinity for dsDNA with a single-stranded tail than dsDNA or ssDNA. Has an ATPase activity in the absence of DNA. Binds to single-stranded DNA, transiently cleaves and then rejoins the ends, introducing a positive supercoil in the process. The scissile phosphodiester is attacked by the catalytic tyrosine of the enzyme, resulting in the formation of a DNA-(5'-phosphotyrosyl)-enzyme intermediate. Probably involved in rewinding DNA strands in regions of the chromosome that have opened up to allow replication, transcription, DNA repair and/or for DNA protection. The sequence is that of Reverse gyrase from Caldanaerobacter subterraneus subsp. tengcongensis (strain DSM 15242 / JCM 11007 / NBRC 100824 / MB4) (Thermoanaerobacter tengcongensis).